The sequence spans 834 residues: Mannosyl-oligosaccharide glucosidase (834 aa).

Over residues 1-10 (MARGERRRRA) the composition is skewed to basic residues. The tract at residues 1–37 (MARGERRRRAAAAEGARPLERARAAGRRDGRAGGARG) is disordered. Residues 1–43 (MARGERRRRAAAAEGARPLERARAAGRRDGRAGGARGSASGAA) are Cytoplasmic-facing. The Endoplasmic reticulum targeting motif lies at 3–9 (RGERRRR). A compositionally biased stretch (basic and acidic residues) spans 17–31 (RPLERARAAGRRDGR). The chain crosses the membrane as a helical; Signal-anchor for type II membrane protein span at residues 44-64 (LAVVVLALAFGLSGRWVLAWL). At 65-834 (RVRRALTLHP…LVLLIMAEEY (770 aa)) the chain is on the lumenal side. Residues 74–136 (PAPSALPPDS…GTPPKLRHTC (63 aa)) form a required for endoplasmic reticulum targeting region. D580 functions as the Proton donor in the catalytic mechanism. Residue N654 is glycosylated (N-linked (GlcNAc...) asparagine). E804 acts as the Proton acceptor in catalysis.

It belongs to the glycosyl hydrolase 63 family.

The protein localises to the endoplasmic reticulum membrane. The enzyme catalyses N(4)-(alpha-D-Glc-(1-&gt;2)-alpha-D-Glc-(1-&gt;3)-alpha-D-Glc-(1-&gt;3)-alpha-D-Man-(1-&gt;2)-alpha-D-Man-(1-&gt;2)-alpha-D-Man-(1-&gt;3)-[alpha-D-Man-(1-&gt;2)-alpha-D-Man-(1-&gt;3)-[alpha-D-Man-(1-&gt;2)-alpha-D-Man-(1-&gt;6)]-alpha-D-Man-(1-&gt;6)]-beta-D-Man-(1-&gt;4)-beta-D-GlcNAc-(1-&gt;4)-beta-D-GlcNAc)-L-asparaginyl-[protein] + H2O = N(4)-(alpha-D-Glc-(1-&gt;3)-alpha-D-Glc-(1-&gt;3)-alpha-D-Man-(1-&gt;2)-alpha-D-Man-(1-&gt;2)-alpha-D-Man-(1-&gt;3)-[alpha-D-Man-(1-&gt;2)-alpha-D-Man-(1-&gt;3)-[alpha-D-Man-(1-&gt;2)-alpha-D-Man-(1-&gt;6)]-alpha-D-Man-(1-&gt;6)]-beta-D-Man-(1-&gt;4)-beta-D-GlcNAc-(1-&gt;4)-beta-D-GlcNAc)-L-asparaginyl-[protein] + beta-D-glucose. The protein operates within glycan metabolism; N-glycan degradation. With respect to regulation, inhibited by the deoxynojirimycin derivative N-9'-Methoxynonyl-1-Deoxynojirimycin. Its function is as follows. In the context of N-glycan degradation, cleaves the distal alpha 1,2-linked glucose residue from the Glc(3)Man(9)GlcNAc(2) oligosaccharide precursor in a highly specific manner. In terms of biological role, (Microbial infection) Required for successful influenza or dengue virus infection; inhibition of its activity by a deoxynojirimycin derivative prevents death in mice infected with lethal doses of influenza or dengue viruses, even when administrated after infection. The chain is Mannosyl-oligosaccharide glucosidase from Mus musculus (Mouse).